Reading from the N-terminus, the 275-residue chain is NH(3)-dependent NAD(+) synthetase (275 aa).

50–57 (GISGGVDS) provides a ligand contact to ATP. Position 56 (aspartate 56) interacts with Mg(2+). A deamido-NAD(+)-binding site is contributed by arginine 147. Threonine 167 contributes to the ATP binding site. Glutamate 172 contacts Mg(2+). Deamido-NAD(+) contacts are provided by lysine 180 and aspartate 187. The ATP site is built by lysine 196 and threonine 218. Position 267-268 (267-268 (HK)) interacts with deamido-NAD(+).

This sequence belongs to the NAD synthetase family. As to quaternary structure, homodimer.

The enzyme catalyses deamido-NAD(+) + NH4(+) + ATP = AMP + diphosphate + NAD(+) + H(+). It functions in the pathway cofactor biosynthesis; NAD(+) biosynthesis; NAD(+) from deamido-NAD(+) (ammonia route): step 1/1. In terms of biological role, catalyzes the ATP-dependent amidation of deamido-NAD to form NAD. Uses ammonia as a nitrogen source. This is NH(3)-dependent NAD(+) synthetase from Pseudomonas aeruginosa (strain UCBPP-PA14).